Here is a 342-residue protein sequence, read N- to C-terminus: Large ribosomal subunit protein uL3 (342 aa).

It belongs to the universal ribosomal protein uL3 family. As to quaternary structure, part of the 50S ribosomal subunit. Forms a cluster with proteins L14 and L24e.

In terms of biological role, one of the primary rRNA binding proteins, it binds directly near the 3'-end of the 23S rRNA, where it nucleates assembly of the 50S subunit. The protein is Large ribosomal subunit protein uL3 of Pyrobaculum islandicum (strain DSM 4184 / JCM 9189 / GEO3).